The primary structure comprises 299 residues: Aspartate carbamoyltransferase catalytic subunit (299 aa).

2 residues coordinate carbamoyl phosphate: arginine 54 and threonine 55. An L-aspartate-binding site is contributed by lysine 83. Carbamoyl phosphate is bound by residues arginine 104, histidine 132, and glutamine 135. 2 residues coordinate L-aspartate: arginine 165 and arginine 222. Residues leucine 261 and proline 262 each coordinate carbamoyl phosphate.

It belongs to the aspartate/ornithine carbamoyltransferase superfamily. ATCase family. In terms of assembly, heterooligomer of catalytic and regulatory chains.

The catalysed reaction is carbamoyl phosphate + L-aspartate = N-carbamoyl-L-aspartate + phosphate + H(+). It participates in pyrimidine metabolism; UMP biosynthesis via de novo pathway; (S)-dihydroorotate from bicarbonate: step 2/3. Functionally, catalyzes the condensation of carbamoyl phosphate and aspartate to form carbamoyl aspartate and inorganic phosphate, the committed step in the de novo pyrimidine nucleotide biosynthesis pathway. This Archaeoglobus fulgidus (strain ATCC 49558 / DSM 4304 / JCM 9628 / NBRC 100126 / VC-16) protein is Aspartate carbamoyltransferase catalytic subunit.